Here is a 988-residue protein sequence, read N- to C-terminus: DNA polymerase (988 aa).

This sequence belongs to the DNA polymerase type-B family. Interacts with A20. Component of the Uracil-DNA glycosylase(UDG)-A20-polymerase complex; A20 and UDG form a heterodimeric processivity factor that associates with E9 to form the processive polymerase holoenzyme.

It catalyses the reaction DNA(n) + a 2'-deoxyribonucleoside 5'-triphosphate = DNA(n+1) + diphosphate. Functionally, catalyzes DNA synthesis. Acquires processivity by associating with a heterodimeric processivity factor comprised of the viral A20 and D4 proteins, thereby forming the DNA polymerase holoenzyme. Displays 3'- to 5' exonuclease activity. Might participate in viral DNA recombination. Does not perform translesion synthesis across an abasic site. The polypeptide is DNA polymerase (POL) (Vertebrata (FPV)).